Reading from the N-terminus, the 340-residue chain is tRNA (cytosine(34)-C(5))-methyltransferase, mitochondrial (340 aa).

Residues 139–145 (CAAPGGK), Glu162, Asp193, and Asp211 contribute to the S-adenosyl-L-methionine site. The active-site Nucleophile is the Cys265.

Belongs to the class I-like SAM-binding methyltransferase superfamily. RsmB/NOP family.

Its subcellular location is the mitochondrion matrix. It catalyses the reaction cytidine(34) in mitochondrial tRNA + S-adenosyl-L-methionine = 5-methylcytidine(34) in mitochondrial tRNA + S-adenosyl-L-homocysteine + H(+). Mitochondrial tRNA methyltransferase that mediates methylation of cytosine to 5-methylcytosine (m5C) at position 34 of mt-tRNA(Met). mt-tRNA(Met) methylation at cytosine(34) takes place at the wobble position of the anticodon and initiates the formation of 5-formylcytosine (f(5)c) at this position. mt-tRNA(Met) containing the f(5)c modification at the wobble position enables recognition of the AUA codon in addition to the AUG codon, expanding codon recognition in mitochondrial translation. The sequence is that of tRNA (cytosine(34)-C(5))-methyltransferase, mitochondrial from Homo sapiens (Human).